A 172-amino-acid polypeptide reads, in one-letter code: Translation initiation factor IF-3 (172 aa).

Belongs to the IF-3 family. In terms of assembly, monomer.

Its subcellular location is the cytoplasm. Functionally, IF-3 binds to the 30S ribosomal subunit and shifts the equilibrium between 70S ribosomes and their 50S and 30S subunits in favor of the free subunits, thus enhancing the availability of 30S subunits on which protein synthesis initiation begins. The sequence is that of Translation initiation factor IF-3 from Campylobacter fetus subsp. fetus (strain 82-40).